A 191-amino-acid polypeptide reads, in one-letter code: Calcium-activated potassium channel subunit beta-1 (191 aa).

Residues 1–15 (MGKKLVMAQKRGETR) are Cytoplasmic-facing. Residues 16–36 (ALCLGVAMVMCAVITYYILGT) traverse the membrane as a helical segment. Residues 37 to 157 (TMLPLYQKSV…YQRLYGPQAL (121 aa)) are Extracellular-facing. Asn-80 and Asn-142 each carry an N-linked (GlcNAc...) asparagine glycan. A helical membrane pass occupies residues 158–178 (LASLFWPTFLLTGGLLIIAMV). The Cytoplasmic segment spans residues 179–191 (KINRSLSILAAQK).

The protein belongs to the KCNMB (TC 8.A.14.1) family. KCNMB1 subfamily. Interacts with KCNMA1 tetramer. There are probably 4 molecules of KCMNB1 per KCNMA1 tetramer. Post-translationally, N-glycosylated.

The protein resides in the membrane. Its function is as follows. Regulatory subunit of the calcium activated potassium KCNMA1 (maxiK) channel. Modulates the calcium sensitivity and gating kinetics of KCNMA1, thereby contributing to KCNMA1 channel diversity. Increases the apparent Ca(2+)/voltage sensitivity of the KCNMA1 channel. It also modifies KCNMA1 channel kinetics and alters its pharmacological properties. It slows down the activation and the deactivation kinetics of the channel. Acts as a negative regulator of smooth muscle contraction by enhancing the calcium sensitivity to KCNMA1. Its presence is also a requirement for internal binding of the KCNMA1 channel opener dehydrosoyasaponin I (DHS-1) triterpene glycoside and for external binding of the agonist hormone 17-beta-estradiol (E2). Increases the binding activity of charybdotoxin (CTX) toxin to KCNMA1 peptide blocker by increasing the CTX association rate and decreasing the dissociation rate. The polypeptide is Calcium-activated potassium channel subunit beta-1 (KCNMB1) (Oryctolagus cuniculus (Rabbit)).